We begin with the raw amino-acid sequence, 607 residues long: DNA primase (607 aa).

The CHC2-type zinc finger occupies 39–63 (CPFHDDKNPSMSISSSKNIFKCWAC). The Toprim domain maps to 267–350 (NQLFIVEGYF…IVEIVQWEHN (84 aa)). Positions 273, 319, and 321 each coordinate Mg(2+).

Belongs to the DnaG primase family. In terms of assembly, monomer. Interacts with DnaB. It depends on Zn(2+) as a cofactor. Mg(2+) is required as a cofactor.

It carries out the reaction ssDNA + n NTP = ssDNA/pppN(pN)n-1 hybrid + (n-1) diphosphate.. Functionally, RNA polymerase that catalyzes the synthesis of short RNA molecules used as primers for DNA polymerase during DNA replication. The chain is DNA primase from Mycoplasma genitalium (strain ATCC 33530 / DSM 19775 / NCTC 10195 / G37) (Mycoplasmoides genitalium).